Consider the following 387-residue polypeptide: Flap endonuclease 1 (387 aa).

An N-domain region spans residues 1 to 104 (MGILGLSKLI…GELAKRAERR (104 aa)). A Mg(2+)-binding site is contributed by Asp34. Residues Arg47 and Arg70 each coordinate DNA. Mg(2+) contacts are provided by Asp86, Glu158, Glu160, Asp179, and Asp181. The interval 122-253 (GIEKFNRRLV…KRAIELINNY (132 aa)) is I-domain. Glu158 contributes to the DNA binding site. DNA is bound by residues Gly231 and Asp233. Asp233 provides a ligand contact to Mg(2+). The segment at 336–344 (TQVRLDSFF) is interaction with PCNA. The interval 346-387 (TLPSTPNATNAAKRKAEEAKKSANNKKAKTSGGVGGRGRRPK) is disordered.

The protein belongs to the XPG/RAD2 endonuclease family. FEN1 subfamily. In terms of assembly, interacts with PCNA. Three molecules of FEN1 bind to one PCNA trimer with each molecule binding to one PCNA monomer. PCNA stimulates the nuclease activity without altering cleavage specificity. Requires Mg(2+) as cofactor. Phosphorylated. Phosphorylation upon DNA damage induces relocalization to the nuclear plasma.

Its subcellular location is the nucleus. It localises to the nucleolus. The protein localises to the nucleoplasm. The protein resides in the mitochondrion. Its function is as follows. Structure-specific nuclease with 5'-flap endonuclease and 5'-3' exonuclease activities involved in DNA replication and repair. During DNA replication, cleaves the 5'-overhanging flap structure that is generated by displacement synthesis when DNA polymerase encounters the 5'-end of a downstream Okazaki fragment. It enters the flap from the 5'-end and then tracks to cleave the flap base, leaving a nick for ligation. Also involved in the long patch base excision repair (LP-BER) pathway, by cleaving within the apurinic/apyrimidinic (AP) site-terminated flap. Acts as a genome stabilization factor that prevents flaps from equilibrating into structures that lead to duplications and deletions. Also possesses 5'-3' exonuclease activity on nicked or gapped double-stranded DNA, and exhibits RNase H activity. Also involved in replication and repair of rDNA and in repairing mitochondrial DNA. The protein is Flap endonuclease 1 of Drosophila erecta (Fruit fly).